We begin with the raw amino-acid sequence, 506 residues long: Maturase K (506 aa).

Belongs to the intron maturase 2 family. MatK subfamily.

It localises to the plastid. The protein localises to the chloroplast. Functionally, usually encoded in the trnK tRNA gene intron. Probably assists in splicing its own and other chloroplast group II introns. The protein is Maturase K of Rhododendron tomentosum (Marsh Labrador tea).